Reading from the N-terminus, the 226-residue chain is PKHD-type hydroxylase Pput_0892 (226 aa).

The 101-residue stretch at 78–178 folds into the Fe2OG dioxygenase domain; the sequence is KVFPPLINCY…RYAAFFWTQS (101 aa). Residues His96, Asp98, and His159 each contribute to the Fe cation site. Arg169 is a 2-oxoglutarate binding site.

It depends on Fe(2+) as a cofactor. The cofactor is L-ascorbate.

The chain is PKHD-type hydroxylase Pput_0892 from Pseudomonas putida (strain ATCC 700007 / DSM 6899 / JCM 31910 / BCRC 17059 / LMG 24140 / F1).